Here is a 549-residue protein sequence, read N- to C-terminus: MKNINPTRTAAWQALQQHFGQMKSVHMRDLFAADADRFSKFSATFDDQMLVDYSKNRINAETLEKLQALARETDLQGAIAAMFAGEKINRTEDRAVLHIALRNRSNTPICVDGKDVMPEVNAVLAKMKQFCVRVIDGEWRGYTGKAITDVVNIGIGGSDLGPYMVTEALRPYKNHLTMHFVSNVDGTHIAETLQRLNPETTLFLVASKTFTTQETMTNAHSARDWFLQAAGDERHVARHFAALSTNVQAVAAFGIDTANMFEFWDWVGGRYSLWSAIGLSIALSIGYDNFEQLLAGAHAMDRHFASAPLPQNLPVLLALIGIWYNNFFGAETEAILPYDQYMHRFPAYFQQGNMESNGKYVDRDGQVVDYQTGPIIWGEPGTNGQHAFYQLIHQGTKLIPCDFIAPAISHNPLGDHHGKLLSNFFAQTEALAFGKSREAVEEEFAKAGKSAAEVQHIVPFKVFEGNRPTNSILLREITPYSLGMLIALYEHKIFTQGVILNIFSFDQWGVELGKQLANRILPELEDAQPVRSHDSSTNALINRFKAWRA.

The Proton donor role is filled by glutamate 355. Catalysis depends on residues histidine 386 and lysine 514.

Belongs to the GPI family.

The protein resides in the cytoplasm. The enzyme catalyses alpha-D-glucose 6-phosphate = beta-D-fructose 6-phosphate. It participates in carbohydrate biosynthesis; gluconeogenesis. Its pathway is carbohydrate degradation; glycolysis; D-glyceraldehyde 3-phosphate and glycerone phosphate from D-glucose: step 2/4. Its function is as follows. Catalyzes the reversible isomerization of glucose-6-phosphate to fructose-6-phosphate. The protein is Glucose-6-phosphate isomerase of Edwardsiella ictaluri (strain 93-146).